The chain runs to 323 residues: tRNA U34 carboxymethyltransferase (323 aa).

Carboxy-S-adenosyl-L-methionine-binding positions include lysine 91, tryptophan 105, lysine 110, glycine 130, 152 to 154 (DPS), 181 to 182 (IE), methionine 196, tyrosine 200, and arginine 315.

It belongs to the class I-like SAM-binding methyltransferase superfamily. CmoB family. In terms of assembly, homotetramer.

It catalyses the reaction carboxy-S-adenosyl-L-methionine + 5-hydroxyuridine(34) in tRNA = 5-carboxymethoxyuridine(34) in tRNA + S-adenosyl-L-homocysteine + H(+). Its function is as follows. Catalyzes carboxymethyl transfer from carboxy-S-adenosyl-L-methionine (Cx-SAM) to 5-hydroxyuridine (ho5U) to form 5-carboxymethoxyuridine (cmo5U) at position 34 in tRNAs. In Vibrio cholerae serotype O1 (strain ATCC 39541 / Classical Ogawa 395 / O395), this protein is tRNA U34 carboxymethyltransferase.